The following is a 650-amino-acid chain: Threonine--tRNA ligase, chloroplastic/mitochondrial 2 (650 aa).

3 residues coordinate Zn(2+): Cys347, His398, and His524.

Belongs to the class-II aminoacyl-tRNA synthetase family.

It localises to the plastid. The protein localises to the chloroplast. It is found in the mitochondrion. The catalysed reaction is tRNA(Thr) + L-threonine + ATP = L-threonyl-tRNA(Thr) + AMP + diphosphate + H(+). The polypeptide is Threonine--tRNA ligase, chloroplastic/mitochondrial 2 (Arabidopsis thaliana (Mouse-ear cress)).